A 409-amino-acid chain; its full sequence is Torsin-4A (409 aa).

The segment covering 1–16 (MGEQDPSDRLRGDQLK) has biased composition (basic and acidic residues). 2 disordered regions span residues 1-28 (MGEQ…SFSQ) and 75-99 (DNLH…KGRV). Over residues 17–28 (EPNQNGKGSFSQ) the composition is skewed to polar residues. The span at 88–98 (PRKRKKKRKGR) shows a compositional bias: basic residues. Residues 120–136 (CLYLLCIIVFLQVYNAI) traverse the membrane as a helical segment. Residue 192 to 199 (GPTGVGKS) participates in ATP binding.

Belongs to the ClpA/ClpB family. Torsin subfamily.

It is found in the membrane. This chain is Torsin-4A (tor4a), found in Danio rerio (Zebrafish).